A 298-amino-acid polypeptide reads, in one-letter code: Cyclin-dependent kinase 2 homolog (298 aa).

The 281-residue stretch at 4–284 folds into the Protein kinase domain; sequence YHKMEKIGEG…AKEALKHDYF (281 aa). ATP-binding positions include 10-18 and K32; that span reads IGEGTYGVV. At T14 the chain carries Phosphothreonine. Residue Y15 is modified to Phosphotyrosine. D125 serves as the catalytic Proton acceptor. At T158 the chain carries Phosphothreonine.

Belongs to the protein kinase superfamily. CMGC Ser/Thr protein kinase family. CDC2/CDKX subfamily. In terms of assembly, may form a complex composed of at least the catalytic subunit CRK2 and a cyclin. Requires Mg(2+) as cofactor.

The protein resides in the cytoplasm. It carries out the reaction L-seryl-[protein] + ATP = O-phospho-L-seryl-[protein] + ADP + H(+). The catalysed reaction is L-threonyl-[protein] + ATP = O-phospho-L-threonyl-[protein] + ADP + H(+). The enzyme catalyses [DNA-directed RNA polymerase] + ATP = phospho-[DNA-directed RNA polymerase] + ADP + H(+). Phosphorylation at Thr-14 or Tyr-15 inactivates the enzyme, while phosphorylation at Thr-158 activates it. In terms of biological role, serine/threonine-protein kinase. Involved in the control of the cell cycle. Required for entry into S-phase and mitosis. Probable component of the kinase complex that phosphorylates the repetitive C-terminus of RNA polymerase II. The protein is Cyclin-dependent kinase 2 homolog of Theileria annulata.